The following is a 106-amino-acid chain: Putative protein LRRC37A5P (106 aa).

This Homo sapiens (Human) protein is Putative protein LRRC37A5P (LRRC37A5P).